A 429-amino-acid polypeptide reads, in one-letter code: Ribosomal RNA small subunit methyltransferase B (429 aa).

S-adenosyl-L-methionine contacts are provided by residues 254-260 (CAAPGGK), aspartate 277, aspartate 303, and aspartate 322. Cysteine 375 functions as the Nucleophile in the catalytic mechanism. A disordered region spans residues 397–419 (ALSETGTPDQPGQQNLPGGEEGD). A compositionally biased stretch (polar residues) spans 400–412 (ETGTPDQPGQQNL).

It belongs to the class I-like SAM-binding methyltransferase superfamily. RsmB/NOP family.

It localises to the cytoplasm. The catalysed reaction is cytidine(967) in 16S rRNA + S-adenosyl-L-methionine = 5-methylcytidine(967) in 16S rRNA + S-adenosyl-L-homocysteine + H(+). In terms of biological role, specifically methylates the cytosine at position 967 (m5C967) of 16S rRNA. The protein is Ribosomal RNA small subunit methyltransferase B of Salmonella enteritidis PT4 (strain P125109).